Reading from the N-terminus, the 193-residue chain is Peptidyl-tRNA hydrolase (193 aa).

A tRNA-binding site is contributed by Tyr-17. The Proton acceptor role is filled by His-22. Residues Tyr-68, Asn-70, and Asn-116 each coordinate tRNA.

Belongs to the PTH family. In terms of assembly, monomer.

The protein resides in the cytoplasm. It catalyses the reaction an N-acyl-L-alpha-aminoacyl-tRNA + H2O = an N-acyl-L-amino acid + a tRNA + H(+). In terms of biological role, hydrolyzes ribosome-free peptidyl-tRNAs (with 1 or more amino acids incorporated), which drop off the ribosome during protein synthesis, or as a result of ribosome stalling. Catalyzes the release of premature peptidyl moieties from peptidyl-tRNA molecules trapped in stalled 50S ribosomal subunits, and thus maintains levels of free tRNAs and 50S ribosomes. In Acinetobacter baumannii (strain AB0057), this protein is Peptidyl-tRNA hydrolase.